A 317-amino-acid polypeptide reads, in one-letter code: MGVIIYSVLISFLFSILQGPLFIPILHKLKFGQPIREDGPKNHMKKAGTPTMGGIIFITTAIIAMIIMRKNLNSNAVFAFVCFFSFAMIGLIDDSLKILHKKNEGLTSKQKFLLQIIVSAAISYYAYIRFGSDTFIPFLKITWTLPPIVYMAAVVFYFVAVTNAVNLTDGLDGLASSVTILVVTFFTVVSFSWHQYELSVFCGIIVGILLGFLKYNSYPAQIFMGDTGSIGLGGAVAAIALVLKLPLLVIIVGGIYVIEVLSDIIQVSYFKLTGKRVFKMAPIHHHFEKLGWHETKVVSVFSIVTVILCLIAFLSLI.

9 helical membrane-spanning segments follow: residues 3–23 (VIIYSVLISFLFSILQGPLFI), 48–68 (GTPTMGGIIFITTAIIAMIIM), 72–92 (LNSNAVFAFVCFFSFAMIGLI), 112–132 (FLLQIIVSAAISYYAYIRFGS), 141–161 (ITWTLPPIVYMAAVVFYFVAV), 171–191 (LDGLASSVTILVVTFFTVVSF), 193–213 (WHQYELSVFCGIIVGILLGFL), 238–258 (AIALVLKLPLLVIIVGGIYVI), and 297–317 (VVSVFSIVTVILCLIAFLSLI).

The protein belongs to the glycosyltransferase 4 family. MraY subfamily. It depends on Mg(2+) as a cofactor.

Its subcellular location is the cell membrane. The catalysed reaction is UDP-N-acetyl-alpha-D-muramoyl-L-alanyl-gamma-D-glutamyl-meso-2,6-diaminopimeloyl-D-alanyl-D-alanine + di-trans,octa-cis-undecaprenyl phosphate = di-trans,octa-cis-undecaprenyl diphospho-N-acetyl-alpha-D-muramoyl-L-alanyl-D-glutamyl-meso-2,6-diaminopimeloyl-D-alanyl-D-alanine + UMP. The protein operates within cell wall biogenesis; peptidoglycan biosynthesis. Catalyzes the initial step of the lipid cycle reactions in the biosynthesis of the cell wall peptidoglycan: transfers peptidoglycan precursor phospho-MurNAc-pentapeptide from UDP-MurNAc-pentapeptide onto the lipid carrier undecaprenyl phosphate, yielding undecaprenyl-pyrophosphoryl-MurNAc-pentapeptide, known as lipid I. This chain is Phospho-N-acetylmuramoyl-pentapeptide-transferase, found in Clostridium acetobutylicum (strain ATCC 824 / DSM 792 / JCM 1419 / IAM 19013 / LMG 5710 / NBRC 13948 / NRRL B-527 / VKM B-1787 / 2291 / W).